Consider the following 374-residue polypeptide: N-acetyldiaminopimelate deacetylase (374 aa).

Residue Asp69 is part of the active site. The Proton acceptor role is filled by Glu128.

It belongs to the peptidase M20A family. N-acetyldiaminopimelate deacetylase subfamily.

The catalysed reaction is N-acetyl-(2S,6S)-2,6-diaminopimelate + H2O = (2S,6S)-2,6-diaminopimelate + acetate. The protein operates within amino-acid biosynthesis; L-lysine biosynthesis via DAP pathway; LL-2,6-diaminopimelate from (S)-tetrahydrodipicolinate (acetylase route): step 3/3. Its function is as follows. Catalyzes the conversion of N-acetyl-diaminopimelate to diaminopimelate and acetate. This is N-acetyldiaminopimelate deacetylase from Bacillus licheniformis (strain ATCC 14580 / DSM 13 / JCM 2505 / CCUG 7422 / NBRC 12200 / NCIMB 9375 / NCTC 10341 / NRRL NRS-1264 / Gibson 46).